Consider the following 574-residue polypeptide: Acetolactate synthase large subunit (574 aa).

Position 51 (E51) interacts with thiamine diphosphate. Residues R153, H261–R282, and D304–N323 contribute to the FAD site. The thiamine pyrophosphate binding stretch occupies residues Q397–S477. 2 residues coordinate Mg(2+): D448 and N475.

Belongs to the TPP enzyme family. In terms of assembly, dimer of large and small chains. Requires Mg(2+) as cofactor. The cofactor is thiamine diphosphate.

The catalysed reaction is 2 pyruvate + H(+) = (2S)-2-acetolactate + CO2. It participates in amino-acid biosynthesis; L-isoleucine biosynthesis; L-isoleucine from 2-oxobutanoate: step 1/4. It functions in the pathway amino-acid biosynthesis; L-valine biosynthesis; L-valine from pyruvate: step 1/4. The protein is Acetolactate synthase large subunit (ilvI) of Buchnera aphidicola subsp. Schlechtendalia chinensis.